Reading from the N-terminus, the 456-residue chain is MIWTRLPLYGHSKPSTGGWQPLRFDGGAFHLKRTAELARALLVLRLCAWPPLVTHGLAFQAWSQRLLGSRLSGALLRASIYGQFVAGETAEEVRGCVQQLQAIGLQPLLAVPTEEEPDSAAKTSEAWYEGNLSAMLHCVDLSRAVADAHGPARNSLMQLKVTALTSPRLCKELSAWIQRPRGSSELRPERLAEAMESGRNLQLSCLSTEQNQHLQASLSRLHRVAQHARAQDVRLLVDAEYTFINPALSLLVAALAMRLDSSEEEGPWVWNTYQAYLKDTHERLERDAKAAHEAGLAFGVKLVRGAYLDKERSVTQLHGKEDCTQPDYEATSRSYSRCLELMLRRVSNHGPRCHLMVASHNEESIRQATRRMWELGIPLDGPVCFGQLLGMCDHVSLALGQAGYMVYKSIPYGCLEEVIPYLIRRAQENRSVLQGARREQALLSQELWRRLLGRTA.

Residues K310 and K320 each carry the N6-acetyllysine modification.

The protein belongs to the proline oxidase family. FAD serves as cofactor.

The catalysed reaction is trans-4-hydroxy-L-proline + a quinone = (3R,5S)-1-pyrroline-3-hydroxy-5-carboxylate + a quinol + H(+). The enzyme catalyses L-proline + a quinone = (S)-1-pyrroline-5-carboxylate + a quinol + H(+). Dehydrogenase that converts trans-4-L-hydroxyproline to delta-1-pyrroline-3-hydroxy-5-carboxylate (Hyp) using ubiquinone-10 as the terminal electron acceptor. Can also use proline as a substrate but with a very much lower efficiency. Does not react with other diastereomers of Hyp: trans-4-D-hydroxyproline and cis-4-L-hydroxyproline. Ubiquininone analogs such as menadione, duroquinone and ubiquinone-1 react more efficiently than oxygen as the terminal electron acceptor during catalysis. The protein is Hydroxyproline dehydrogenase of Rattus norvegicus (Rat).